We begin with the raw amino-acid sequence, 99 residues long: Malonate decarboxylase acyl carrier protein (99 aa).

An O-(phosphoribosyl dephospho-coenzyme A)serine modification is found at Ser25.

This sequence belongs to the MdcC family. Post-translationally, covalently binds the prosthetic group of malonate decarboxylase.

Its subcellular location is the cytoplasm. Subunit of malonate decarboxylase, it is an acyl carrier protein to which acetyl and malonyl thioester residues are bound via a 2'-(5''-phosphoribosyl)-3'-dephospho-CoA prosthetic group and turn over during the catalytic mechanism. The sequence is that of Malonate decarboxylase acyl carrier protein from Pseudomonas syringae pv. tomato (strain ATCC BAA-871 / DC3000).